A 360-amino-acid chain; its full sequence is Photosystem II protein D1 1 (360 aa).

3 helical membrane passes run 29-46, 118-133, and 142-156; these read YVGW…TATT, HFLI…EWEL, and WICV…AATA. Residue H118 coordinates chlorophyll a. Y126 is a binding site for pheophytin a. [CaMn4O5] cluster-binding residues include D170 and E189. A helical membrane pass occupies residues 197–218; sequence FHMLGVAGVFGGSLFSAMHGSL. H198 serves as a coordination point for chlorophyll a. A quinone is bound by residues H215 and 264–265; that span reads SF. H215 lines the Fe cation pocket. H272 is a binding site for Fe cation. The chain crosses the membrane as a helical span at residues 274–288; it reads FLGAWPVVGIWFTAL. [CaMn4O5] cluster-binding residues include H332, E333, D342, and A344. Positions 345-360 are excised as a propeptide; that stretch reads AGEQAPVALQAPAING.

Belongs to the reaction center PufL/M/PsbA/D family. PSII is composed of 1 copy each of membrane proteins PsbA, PsbB, PsbC, PsbD, PsbE, PsbF, PsbH, PsbI, PsbJ, PsbK, PsbL, PsbM, PsbT, PsbX, PsbY, PsbZ, Psb30/Ycf12, peripheral proteins PsbO, CyanoQ (PsbQ), PsbU, PsbV and a large number of cofactors. It forms dimeric complexes. The cofactor is The D1/D2 heterodimer binds P680, chlorophylls that are the primary electron donor of PSII, and subsequent electron acceptors. It shares a non-heme iron and each subunit binds pheophytin, quinone, additional chlorophylls, carotenoids and lipids. D1 provides most of the ligands for the Mn4-Ca-O5 cluster of the oxygen-evolving complex (OEC). There is also a Cl(-1) ion associated with D1 and D2, which is required for oxygen evolution. The PSII complex binds additional chlorophylls, carotenoids and specific lipids.. Tyr-161 forms a radical intermediate that is referred to as redox-active TyrZ, YZ or Y-Z. Post-translationally, C-terminally processed by CtpA; processing is essential to allow assembly of the oxygen-evolving complex and thus photosynthetic growth.

It is found in the cellular thylakoid membrane. The enzyme catalyses 2 a plastoquinone + 4 hnu + 2 H2O = 2 a plastoquinol + O2. Its function is as follows. Photosystem II (PSII) is a light-driven water:plastoquinone oxidoreductase that uses light energy to abstract electrons from H(2)O, generating O(2) and a proton gradient subsequently used for ATP formation. It consists of a core antenna complex that captures photons, and an electron transfer chain that converts photonic excitation into a charge separation. The D1/D2 (PsbA/PsbD) reaction center heterodimer binds P680, the primary electron donor of PSII as well as several subsequent electron acceptors. The chain is Photosystem II protein D1 1 from Picosynechococcus sp. (strain ATCC 27264 / PCC 7002 / PR-6) (Agmenellum quadruplicatum).